A 273-amino-acid chain; its full sequence is Formamidopyrimidine-DNA glycosylase (273 aa).

Proline 2 acts as the Schiff-base intermediate with DNA in catalysis. Catalysis depends on glutamate 3, which acts as the Proton donor. The active-site Proton donor; for beta-elimination activity is lysine 57. Residues histidine 91, arginine 110, and lysine 151 each coordinate DNA. The FPG-type zinc-finger motif lies at 236–270; it reads QVYGRKDEACNDCGTIIEAKVIGQRNSYFCPHCQM. Arginine 260 serves as the catalytic Proton donor; for delta-elimination activity.

The protein belongs to the FPG family. As to quaternary structure, monomer. The cofactor is Zn(2+).

It catalyses the reaction Hydrolysis of DNA containing ring-opened 7-methylguanine residues, releasing 2,6-diamino-4-hydroxy-5-(N-methyl)formamidopyrimidine.. The enzyme catalyses 2'-deoxyribonucleotide-(2'-deoxyribose 5'-phosphate)-2'-deoxyribonucleotide-DNA = a 3'-end 2'-deoxyribonucleotide-(2,3-dehydro-2,3-deoxyribose 5'-phosphate)-DNA + a 5'-end 5'-phospho-2'-deoxyribonucleoside-DNA + H(+). In terms of biological role, involved in base excision repair of DNA damaged by oxidation or by mutagenic agents. Acts as a DNA glycosylase that recognizes and removes damaged bases. Has a preference for oxidized purines, such as 7,8-dihydro-8-oxoguanine (8-oxoG). Has AP (apurinic/apyrimidinic) lyase activity and introduces nicks in the DNA strand. Cleaves the DNA backbone by beta-delta elimination to generate a single-strand break at the site of the removed base with both 3'- and 5'-phosphates. In Actinobacillus pleuropneumoniae serotype 3 (strain JL03), this protein is Formamidopyrimidine-DNA glycosylase.